A 307-amino-acid chain; its full sequence is Major pollen allergen Lol p 5a (307 aa).

The N-terminal stretch at 1 to 25 (MAVQKYTVALFLAVALVAGPAASYA) is a signal peptide.

This sequence belongs to the Poa p IX/Phl p VI allergen family. In terms of tissue distribution, pollen, starch granules.

This Lolium perenne (Perennial ryegrass) protein is Major pollen allergen Lol p 5a (LOLPIB).